The chain runs to 308 residues: Ribonuclease Z (308 aa).

Zn(2+) is bound by residues His-60, His-62, Asp-64, His-65, His-140, Asp-209, and His-269. The active-site Proton acceptor is the Asp-64.

This sequence belongs to the RNase Z family. In terms of assembly, homodimer. The cofactor is Zn(2+).

The enzyme catalyses Endonucleolytic cleavage of RNA, removing extra 3' nucleotides from tRNA precursor, generating 3' termini of tRNAs. A 3'-hydroxy group is left at the tRNA terminus and a 5'-phosphoryl group is left at the trailer molecule.. Zinc phosphodiesterase, which displays some tRNA 3'-processing endonuclease activity. Probably involved in tRNA maturation, by removing a 3'-trailer from precursor tRNA. This chain is Ribonuclease Z, found in Methanococcus maripaludis (strain DSM 14266 / JCM 13030 / NBRC 101832 / S2 / LL).